The primary structure comprises 200 residues: HTH-type transcriptional regulator BetI (200 aa).

Positions 8-68 (DIRKPQLVQA…ETMREILRQL (61 aa)) constitute an HTH tetR-type domain. Positions 31 to 50 (SIALISKEAGVSTGIINHYF) form a DNA-binding region, H-T-H motif.

Its pathway is amine and polyamine biosynthesis; betaine biosynthesis via choline pathway [regulation]. Its function is as follows. Repressor involved in the biosynthesis of the osmoprotectant glycine betaine. It represses transcription of the choline transporter BetT and the genes of BetAB involved in the synthesis of glycine betaine. This is HTH-type transcriptional regulator BetI from Vibrio atlanticus (strain LGP32) (Vibrio splendidus (strain Mel32)).